The chain runs to 389 residues: Probable protein phosphatase 2C 12 (389 aa).

The PPM-type phosphatase domain occupies 42–356 (VASLFSQRGK…DDCSAVCLFL (315 aa)). 2 residues coordinate Mn(2+): Asp-77 and Gly-78. The tract at residues 119 to 145 (AFSDDAAASSSADSSGNSSPQPSASAS) is disordered. Residues 121 to 145 (SDDAAASSSADSSGNSSPQPSASAS) show a composition bias toward low complexity. Residues Asp-301 and Asp-347 each coordinate Mn(2+).

The protein belongs to the PP2C family. The cofactor is Mg(2+). Mn(2+) is required as a cofactor.

The catalysed reaction is O-phospho-L-seryl-[protein] + H2O = L-seryl-[protein] + phosphate. The enzyme catalyses O-phospho-L-threonyl-[protein] + H2O = L-threonyl-[protein] + phosphate. The protein is Probable protein phosphatase 2C 12 of Oryza sativa subsp. japonica (Rice).